The chain runs to 390 residues: Spore development regulator vosA (390 aa).

In terms of domain architecture, Velvet spans 3–132 (NNTSSDFDLI…ADQGVKLRIR (130 aa)). A compositionally biased stretch (basic and acidic residues) spans 137 to 149 (TMLKRSTRPDEFH). Disordered regions lie at residues 137 to 191 (TMLK…PVKR) and 265 to 390 (QASA…GTPQ). Over residues 165-175 (PPSSSYGGYPP) the composition is skewed to low complexity. The Nuclear localization signal motif lies at 273–280 (IPDPTGQS). Polar residues-rich tracts occupy residues 350-364 (QTPQANTPILPSQMV) and 371-390 (SSVTGPTTFNHPDSPNGTPQ).

It belongs to the velvet family. VosA subfamily. As to quaternary structure, forms a heterodimeric complex with velB; the formation of the velB-vosA complex is light-dependent. Interacts with velA, velB and velC.

The protein resides in the nucleus. Its function is as follows. Component of the velB-VosA heterodimeric complex that plays a dual role in activating genes associated with spore maturation and repressing certain development-associated genes. The complex binds DNA through the DNA-binding domain of vosA that recognizes an 11-nucleotide consensus sequence 5'-CTGGCCGCGGC-3' consisting of two motifs in the promoters of key developmental regulatory genes. The polypeptide is Spore development regulator vosA (Penicillium rubens (strain ATCC 28089 / DSM 1075 / NRRL 1951 / Wisconsin 54-1255) (Penicillium chrysogenum)).